Here is a 274-residue protein sequence, read N- to C-terminus: Protein STAY-GREEN, chloroplastic (274 aa).

A chloroplast-targeting transit peptide spans 1 to 48; it reads MAAATSTMSLIPPITQQQRWHAADSLVVLASRRHDSRRRRRCRYVVPR.

Belongs to the staygreen family.

It localises to the plastid. Its subcellular location is the chloroplast. Involved in the disassembling mechanism of the intact light-harvesting complex of photosystem II (LHCPII) in the thylakoid membranes. Required to trigger chlorophyll degradation during natural and dark-induced leaf senescence. The sequence is that of Protein STAY-GREEN, chloroplastic (SGR) from Oryza sativa subsp. indica (Rice).